A 342-amino-acid chain; its full sequence is C-X-C chemokine receptor type 6 (342 aa).

Residues Met-1 to Val-32 lie on the Extracellular side of the membrane. An N-linked (GlcNAc...) asparagine glycan is attached at Asn-16. A helical transmembrane segment spans residues Phe-33 to Tyr-59. Over His-60–Val-68 the chain is Cytoplasmic. A helical transmembrane segment spans residues Phe-69 to Tyr-89. At Ala-90–Lys-103 the chain is on the extracellular side. Cysteines 102 and 180 form a disulfide. The helical transmembrane segment at Thr-104–Val-125 threads the bilayer. The Cytoplasmic segment spans residues Asp-126–Lys-143. Residues Lys-144–Leu-164 traverse the membrane as a helical segment. Residues Pro-165–Ile-187 are Extracellular-facing. A helical membrane pass occupies residues Ser-188–Ile-215. The Cytoplasmic segment spans residues Lys-216–Lys-231. A helical transmembrane segment spans residues Ile-232–Glu-259. Residues Tyr-260 to Ala-275 are Extracellular-facing. The helical transmembrane segment at Ile-276 to Leu-293 threads the bilayer. Topologically, residues Lys-294 to Leu-342 are cytoplasmic.

It belongs to the G-protein coupled receptor 1 family.

The protein localises to the cell membrane. Its function is as follows. Receptor for the C-X-C chemokine CXCL16. Used as a coreceptor by SIVs and by strains of HIV-2 and m-tropic HIV-1. The protein is C-X-C chemokine receptor type 6 (CXCR6) of Chlorocebus aethiops (Green monkey).